The primary structure comprises 630 residues: Auxin efflux carrier component 2 (630 aa).

Residues 1–6 (MITGRD) lie on the Extracellular side of the membrane. The helical transmembrane segment at 7 to 27 (IYDVLAAIVPLYVAMFLAYGS) threads the bilayer. At 28-38 (VRWWGIFTPDQ) the chain is on the cytoplasmic side. The helical transmembrane segment at 39 to 59 (CSGINRFVAVFAVPLLSFHFI) threads the bilayer. Val51 contacts (indol-3-yl)acetate. Over 60–70 (STNDPYSMNYR) the chain is Extracellular. The chain crosses the membrane as a helical span at residues 71–91 (FLAADSLQKLVILAALAVWHN). At 92–108 (LLSRYRRNGGAAASLDW) the chain is on the cytoplasmic side. A helical transmembrane segment spans residues 109-129 (TITLFSLSTLPNTLVMGIPLL). (indol-3-yl)acetate-binding residues include Asn120 and Leu122. The Extracellular portion of the chain corresponds to 130 to 139 (RAMYGDFSGS). Residues 140–160 (LMVQIVVLQSVIWYTLMLFLF) traverse the membrane as a helical segment. Tyr153 lines the (indol-3-yl)acetate pocket. The Cytoplasmic segment spans residues 161–490 (EYRGAKALIS…LIRNPNTYSS (330 aa)). The tract at residues 317–350 (ASGKAADPPSYPAPNPGMMPAPRKKELGGSNSNS) is disordered. The segment covering 325–335 (PSYPAPNPGMM) has biased composition (pro residues). A helical transmembrane segment spans residues 491-511 (LIGLVWSLVSFRWNIQMPSII). At 512-514 (KGS) the chain is on the extracellular side. A helical transmembrane segment spans residues 515–535 (ISILSDAGLGMAMFSLGLFMA). The Cytoplasmic portion of the chain corresponds to 536–549 (LQPKIISCGKTVAT). A helical membrane pass occupies residues 550-570 (FAMAVRFLTGPAVIAATSIAI). Residues 571-574 (GLRG) are Extracellular-facing. The helical transmembrane segment at 575 to 595 (VLLHVAIVQAALPQGIVPFVF) threads the bilayer. The (indol-3-yl)acetate site is built by Ile590 and Val591. The Cytoplasmic segment spans residues 596 to 609 (AKEYNCHPQILSTA). Residues 610–630 (VIFGMLIALPITILYYVLLGI) traverse the membrane as a helical segment.

Belongs to the auxin efflux carrier (TC 2.A.69.1) family. In terms of assembly, homodimer. In terms of tissue distribution, expressed in roots, leaves, shoot apex and panicles. Expressed in roots, stem bases and young panicles.

It localises to the membrane. Functionally, acts as a component of the auxin efflux carrier. Involved in the basipetal polar auxin transport which contributes to the spreading growth of the tillers. This is Auxin efflux carrier component 2 from Oryza sativa subsp. japonica (Rice).